Reading from the N-terminus, the 222-residue chain is N-(5'-phosphoribosyl)anthranilate isomerase (222 aa).

This sequence belongs to the TrpF family.

The catalysed reaction is N-(5-phospho-beta-D-ribosyl)anthranilate = 1-(2-carboxyphenylamino)-1-deoxy-D-ribulose 5-phosphate. Its pathway is amino-acid biosynthesis; L-tryptophan biosynthesis; L-tryptophan from chorismate: step 3/5. The polypeptide is N-(5'-phosphoribosyl)anthranilate isomerase (Prosthecochloris aestuarii (strain DSM 271 / SK 413)).